The chain runs to 585 residues: Pyruvate kinase (585 aa).

Substrate is bound at residue Arg32. Residues Asn34, Ser36, Asp66, and Thr67 each coordinate K(+). ATP is bound at residue 34–37 (NFSH). 2 residues coordinate ATP: Arg73 and Lys156. Residue Glu222 participates in Mg(2+) binding. Substrate-binding residues include Gly245, Asp246, and Thr278. A Mg(2+)-binding site is contributed by Asp246.

The protein belongs to the pyruvate kinase family. This sequence in the C-terminal section; belongs to the PEP-utilizing enzyme family. As to quaternary structure, homotetramer. Mg(2+) is required as a cofactor. K(+) serves as cofactor.

It catalyses the reaction pyruvate + ATP = phosphoenolpyruvate + ADP + H(+). Its pathway is carbohydrate degradation; glycolysis; pyruvate from D-glyceraldehyde 3-phosphate: step 5/5. The sequence is that of Pyruvate kinase (pyk) from Bacillus licheniformis.